Consider the following 879-residue polypeptide: Valine--tRNA ligase (879 aa).

The 'HIGH' region signature appears at 45–55 (PNVTGKLHLGH). The 'KMSKS' region signature appears at 521 to 525 (KMSKS). Lys-524 contributes to the ATP binding site. Residues 806–879 (LTELVNVDEE…ERIQDLKESK (74 aa)) are a coiled coil.

It belongs to the class-I aminoacyl-tRNA synthetase family. ValS type 1 subfamily. As to quaternary structure, monomer.

It is found in the cytoplasm. It catalyses the reaction tRNA(Val) + L-valine + ATP = L-valyl-tRNA(Val) + AMP + diphosphate. Catalyzes the attachment of valine to tRNA(Val). As ValRS can inadvertently accommodate and process structurally similar amino acids such as threonine, to avoid such errors, it has a 'posttransfer' editing activity that hydrolyzes mischarged Thr-tRNA(Val) in a tRNA-dependent manner. The sequence is that of Valine--tRNA ligase from Lactobacillus acidophilus (strain ATCC 700396 / NCK56 / N2 / NCFM).